A 198-amino-acid polypeptide reads, in one-letter code: Recombination protein RecR (198 aa).

The C4-type zinc-finger motif lies at 56-71; it reads CTECRDFSETKICAIC. One can recognise a Toprim domain in the interval 79-174; it reads HQLCVVESPP…RPSRLAQGLP (96 aa).

This sequence belongs to the RecR family.

In terms of biological role, may play a role in DNA repair. It seems to be involved in an RecBC-independent recombinational process of DNA repair. It may act with RecF and RecO. The chain is Recombination protein RecR from Xylella fastidiosa (strain 9a5c).